The chain runs to 394 residues: F-box protein At2g17830 (394 aa).

Positions methionine 1–glutamine 47 constitute an F-box domain.

This Arabidopsis thaliana (Mouse-ear cress) protein is F-box protein At2g17830.